A 570-amino-acid chain; its full sequence is Proline--tRNA ligase (570 aa).

The interval 238 to 257 is disordered; it reads ARPAPAEHAEPRPLEKVETP.

This sequence belongs to the class-II aminoacyl-tRNA synthetase family. ProS type 1 subfamily. As to quaternary structure, homodimer.

It is found in the cytoplasm. It catalyses the reaction tRNA(Pro) + L-proline + ATP = L-prolyl-tRNA(Pro) + AMP + diphosphate. Functionally, catalyzes the attachment of proline to tRNA(Pro) in a two-step reaction: proline is first activated by ATP to form Pro-AMP and then transferred to the acceptor end of tRNA(Pro). As ProRS can inadvertently accommodate and process non-cognate amino acids such as alanine and cysteine, to avoid such errors it has two additional distinct editing activities against alanine. One activity is designated as 'pretransfer' editing and involves the tRNA(Pro)-independent hydrolysis of activated Ala-AMP. The other activity is designated 'posttransfer' editing and involves deacylation of mischarged Ala-tRNA(Pro). The misacylated Cys-tRNA(Pro) is not edited by ProRS. The sequence is that of Proline--tRNA ligase from Geobacter sulfurreducens (strain ATCC 51573 / DSM 12127 / PCA).